The chain runs to 893 residues: Protein bride of sevenless (893 aa).

Positions 1–30 (MSGLQLIWKSPTQLVLFVLLITISCIDLCH) are cleaved as a signal peptide. Residues 32–530 (VGAATPTKKS…RIKLDTWVAT (499 aa)) lie on the Extracellular side of the membrane. Disordered regions lie at residues 36–66 (TPTKKSPPVRITKPQPVSSTTTAIPTTNEGS) and 82–102 (GTASSASSSSNGGSDDSSSTT). Residues 50–66 (QPVSSTTTAIPTTNEGS) are compositionally biased toward polar residues. 5 N-linked (GlcNAc...) asparagine glycosylation sites follow: asparagine 183, asparagine 307, asparagine 328, asparagine 471, and asparagine 482. Transmembrane regions (helical) follow at residues 531–551 (GLTAAILGLIATLAILVFIVV), 563–583 (PVTSILLLLSLILVFCSFVPF), 607–627 (LCGVRVFIMTLVYCFVFSLLL), 630–650 (AVMLASIGSEGGFLSHVNGYI), 653–673 (IICVLSVFVQVGMSVQLLVVM), 692–712 (WGLLAYDFLLLCSLVSLVPFI), 722–742 (GILIVIGAVLILIIWSVWIAL), and 752–772 (AAIPLGMQASGWAVLVGILIP). The Cytoplasmic portion of the chain corresponds to 773 to 893 (RTFLIVRGIE…SPDHSKITRF (121 aa)). The disordered stretch occupies residues 858–893 (ANINPQRPPPHPQQSPSRSSVCSLPPSPDHSKITRF).

It belongs to the G-protein coupled receptor 3 family.

The protein localises to the cell membrane. Functionally, acts as a ligand for sevenless tyrosine-kinase receptor during eye development. The sequence is that of Protein bride of sevenless (boss) from Drosophila virilis (Fruit fly).